The chain runs to 397 residues: ATP-dependent RNA helicase eIF4A (397 aa).

The short motif at 24–52 (DSFDDMNLKSELLRGIYAYGFERPSAIQQ) is the Q motif element. The Helicase ATP-binding domain maps to 55–225 (IMPVIKGHDV…TKFMRDPVRI (171 aa)). An ATP-binding site is contributed by 68 to 75 (AQSGTGKT). The short motif at 173 to 176 (DEAD) is the DEAD box element. The region spanning 236 to 397 (GIKQFYIAVE…EMPMNVADLI (162 aa)) is the Helicase C-terminal domain.

This sequence belongs to the DEAD box helicase family. eIF4A subfamily. In terms of assembly, component of the eIF4F complex, which composition varies with external and internal environmental conditions. It is composed of at least eIF4A, eIF4E and eIF4G.

The protein localises to the cytoplasm. The enzyme catalyses ATP + H2O = ADP + phosphate + H(+). Its function is as follows. ATP-dependent RNA helicase which is a subunit of the eIF4F complex involved in cap recognition and is required for mRNA binding to ribosome. In the current model of translation initiation, eIF4A unwinds RNA secondary structures in the 5'-UTR of mRNAs which is necessary to allow efficient binding of the small ribosomal subunit, and subsequent scanning for the initiator codon. The sequence is that of ATP-dependent RNA helicase eIF4A (TIF1) from Chaetomium globosum (strain ATCC 6205 / CBS 148.51 / DSM 1962 / NBRC 6347 / NRRL 1970) (Soil fungus).